A 587-amino-acid chain; its full sequence is 5-aminolevulinate synthase, erythroid-specific, mitochondrial (587 aa).

The N-terminal 49 residues, 1 to 49 (MVTAAMLLQRCPVLIRSPTGLLGKMIKTHQFLFGIGRCPILATQGPSFS), are a transit peptide targeting the mitochondrion. Arg163 provides a ligand contact to succinyl-CoA. Pyridoxal 5'-phosphate-binding residues include Cys258 and Phe259. Residues Ser280 and Lys299 each contribute to the succinyl-CoA site. Pyridoxal 5'-phosphate contacts are provided by Ser332, His360, and Thr388. Residue Lys391 is part of the active site. Lys391 carries the N6-(pyridoxal phosphate)lysine modification. Pyridoxal 5'-phosphate contacts are provided by Thr420 and Thr421. Thr508 contacts succinyl-CoA.

Belongs to the class-II pyridoxal-phosphate-dependent aminotransferase family. In terms of assembly, homodimer. Interacts with SUCLA2. Requires pyridoxal 5'-phosphate as cofactor.

It localises to the mitochondrion inner membrane. The enzyme catalyses succinyl-CoA + glycine + H(+) = 5-aminolevulinate + CO2 + CoA. It participates in porphyrin-containing compound metabolism; protoporphyrin-IX biosynthesis; 5-aminolevulinate from glycine: step 1/1. Catalyzes the pyridoxal 5'-phosphate (PLP)-dependent condensation of succinyl-CoA and glycine to form aminolevulinic acid (ALA), with CoA and CO2 as by-products. Contributes significantly to heme formation during erythropoiesis. This is 5-aminolevulinate synthase, erythroid-specific, mitochondrial (ALAS2) from Bos taurus (Bovine).